We begin with the raw amino-acid sequence, 330 residues long: Aspartate--ammonia ligase (330 aa).

Belongs to the class-II aminoacyl-tRNA synthetase family. AsnA subfamily.

It localises to the cytoplasm. It carries out the reaction L-aspartate + NH4(+) + ATP = L-asparagine + AMP + diphosphate + H(+). It participates in amino-acid biosynthesis; L-asparagine biosynthesis; L-asparagine from L-aspartate (ammonia route): step 1/1. This Escherichia coli O127:H6 (strain E2348/69 / EPEC) protein is Aspartate--ammonia ligase.